Consider the following 657-residue polypeptide: KNR4/SMI1 homolog (657 aa).

3 disordered regions span residues 168–193 (EQQQRAKSSSELPQTVTPQAVKQKGY), 366–402 (SSSVVNRPTPADAAGQARKTQGYSPMVPGASSNESVS), and 416–657 (LTQT…TVAL). A compositionally biased stretch (polar residues) spans 174–187 (KSSSELPQTVTPQA). The segment covering 416–436 (LTQTDASSKGTTKPATPNPMT) has biased composition (polar residues). 2 stretches are compositionally biased toward low complexity: residues 444–455 (STPGSPSAAAEA) and 473–482 (TPTVTKESTP). Over residues 492–504 (LDSKNTETNEDTR) the composition is skewed to basic and acidic residues. Over residues 505–521 (ATNTAHSMAPTVSSAIT) the composition is skewed to polar residues. Basic and acidic residues-rich tracts occupy residues 535-561 (KPKDTEKTDDAKDVHEANKQDLTKANE), 569-604 (VEPKDNEVSADSKVKARAESKSDHDSKTNNIPEKKV), and 627-650 (KSDKKAKPAEDPKEHDLKIEKLNE).

This sequence belongs to the KNR4/SMI1 family.

The polypeptide is KNR4/SMI1 homolog (Eremothecium gossypii (strain ATCC 10895 / CBS 109.51 / FGSC 9923 / NRRL Y-1056) (Yeast)).